The sequence spans 296 residues: MAECSTLESLIEMGFSSTRAEKALTATGNQGIEPAMDWLVEHEDDPDIDEPSVVVPEGSSTDTADTTDTTDTTDTQGMDTSAERLPLTEEEKEKQTKRMMELVAQKQNEREEREKKERIEQEKQRRKHGQELSAIKQKMQEQEMQKAAEDRRREKQEEKMARERVREKIARDKADRARRFGGASSEPISPPAETSIPATTPSPSSPVQEPPTKKEYDQCRIQVRLLDGSALSQTFRAREQLAAVRLYVELNWPGGPPGPFSLLTSFPQRVFTEEDMEKPLQELGLVPTAVLIVAKK.

A UBA domain is found at 1-42 (MAECSTLESLIEMGFSSTRAEKALTATGNQGIEPAMDWLVEH). Positions 43-216 (EDDPDIDEPS…VQEPPTKKEY (174 aa)) are disordered. Low complexity predominate over residues 61–75 (TDTADTTDTTDTTDT). 3 stretches are compositionally biased toward basic and acidic residues: residues 86-100 (PLTE…KRMM), 107-123 (QNER…EQEK), and 138-178 (KMQE…DRAR). Residues 87-177 (LTEEEKEKQT…KIARDKADRA (91 aa)) are a coiled coil. The span at 191–206 (PAETSIPATTPSPSSP) shows a compositional bias: low complexity. One can recognise a UBX domain in the interval 214–293 (KEYDQCRIQV…GLVPTAVLIV (80 aa)).

Its subcellular location is the cytoplasm. Its function is as follows. Component of a complex required to couple deglycosylation and proteasome-mediated degradation of misfolded proteins in the endoplasmic reticulum that are retrotranslocated in the cytosol. Involved in ubiquitin-proteasome systems. The chain is UBX domain-containing protein 1-A (ubxn1-a) from Xenopus laevis (African clawed frog).